The following is a 41-amino-acid chain: Photosystem II reaction center protein X (41 aa).

Topologically, residues 2 to 6 (TITPS) are lumenal. Residues 7-29 (LKGFFIGLLSGAVVLGLTFAVLI) traverse the membrane as a helical segment. Residues 30-41 (AISQIDKVQRSL) are Cytoplasmic-facing.

It belongs to the PsbX family. Type 1 subfamily. As to quaternary structure, PSII is composed of 1 copy each of membrane proteins PsbA, PsbB, PsbC, PsbD, PsbE, PsbF, PsbH, PsbI, PsbJ, PsbK, PsbL, PsbM, PsbT, PsbX, PsbY, PsbZ, Psb30/Ycf12, peripheral proteins PsbO, CyanoQ (PsbQ), PsbU, PsbV and a large number of cofactors. It forms dimeric complexes. Part of a photosystem II (PSII) assembly intermediate complex PSII-I; crystallized from a strain deleted of psbJ, it forms monomeric PSII before addition of the oxygen evolving complex. PSII-I includes 3 assembly factors not found in mature PSII (Psb27, Psb28 and Psb34). The cofactor is PSII binds multiple chlorophylls, carotenoids and specific lipids..

Its subcellular location is the cellular thylakoid membrane. Functionally, involved in the binding and/or turnover of quinones at the Q(B) site of photosystem II (PSII). PSII is a light-driven water plastoquinone oxidoreductase, using light energy to abstract electrons from H(2)O, generating a proton gradient subsequently used for ATP formation. The protein is Photosystem II reaction center protein X of Thermosynechococcus vestitus (strain NIES-2133 / IAM M-273 / BP-1).